Here is a 277-residue protein sequence, read N- to C-terminus: Type IV methyl-directed restriction enzyme EcoKMcrA (277 aa).

The HNH domain maps to 207–257 (CENCGKNAPFYLNDGNPYLEVHHVIPLSSGGADTTDNCVALCPNCHRELHY).

Restriction of 5-methyl and 5-hydroxymethylcytosines at the specific DNA sequence 5'-C(me)CGG-3'. The sequence is that of Type IV methyl-directed restriction enzyme EcoKMcrA from Escherichia coli (strain K12).